The sequence spans 226 residues: Lipoprotein-releasing system ATP-binding protein LolD (226 aa).

Residues 5–226 (LKATNINKIY…LLRNGHWENY (222 aa)) form the ABC transporter domain. 41–48 (GTSGSGKS) serves as a coordination point for ATP.

This sequence belongs to the ABC transporter superfamily. Lipoprotein translocase (TC 3.A.1.125) family. The complex is composed of two ATP-binding proteins (LolD) and two transmembrane proteins (LolC and LolE).

The protein localises to the cell inner membrane. Part of the ABC transporter complex LolCDE involved in the translocation of mature outer membrane-directed lipoproteins, from the inner membrane to the periplasmic chaperone, LolA. Responsible for the formation of the LolA-lipoprotein complex in an ATP-dependent manner. In Psychrobacter arcticus (strain DSM 17307 / VKM B-2377 / 273-4), this protein is Lipoprotein-releasing system ATP-binding protein LolD.